The primary structure comprises 281 residues: Ribosomal RNA large subunit methyltransferase J (281 aa).

S-adenosyl-L-methionine-binding positions include His-19, His-42, Ser-101, Glu-119, 144–145, and Asp-165; that span reads NG. Residue Asp-165 is the Proton acceptor of the active site.

It belongs to the RlmJ family. In terms of assembly, monomer.

The catalysed reaction is adenosine(2030) in 23S rRNA + S-adenosyl-L-methionine = N(6)-methyladenosine(2030) in 23S rRNA + S-adenosyl-L-homocysteine + H(+). In terms of biological role, specifically methylates the adenine in position 2030 of 23S rRNA. In Haemophilus influenzae (strain ATCC 51907 / DSM 11121 / KW20 / Rd), this protein is Ribosomal RNA large subunit methyltransferase J.